Reading from the N-terminus, the 283-residue chain is Lolitrem B biosynthesis cluster protein S (283 aa).

A signal peptide spans 1–27 (MSRSDWIFISLQGFFCLAGVIWKSREG). 5 helical membrane passes run 73-93 (WFWLHLMLYIAQLVGLILIIL), 112-132 (LGYLSYTVGLSTAFPVFSLWI), 157-177 (IFWCTGISHIGIFMVAIVATL), 219-239 (MTGTSSGFFLTVGLFSQALEA), and 250-270 (VRMFFVSLIAGPAAGSADVLL).

It belongs to the ltmS family.

It localises to the membrane. Part of the gene cluster that mediates the biosynthesis of lolitrems, indole-diterpene mycotoxins that are potent tremorgens in mammals, and are synthesized by clavicipitaceous fungal endophytes in association with their grass hosts. The geranylgeranyl diphosphate (GGPP) synthase ltmG is proposed to catalyze the first step in lolitrem biosynthesis. LtmG catalyzes a series of iterative condensations of isopentenyl diphosphate (IPP) with dimethylallyl diphosphate (DMAPP), geranyl diphosphate (GPP), and farnesyl diphosphate (FPP), to form GGPP. GGPP then condenses with indole-3-glycerol phosphate to form 3-geranylgeranylindole, an acyclic intermediate, to be incorporated into paxilline. Either ltmG or ltmC could be responsible for this step, as both are putative prenyl transferases. The FAD-dependent monooxygenase ltmM then catalyzes the epoxidation of the two terminal alkenes of the geranylgeranyl moiety, which is subsequently cyclized by ltmB, to paspaline. The cytochrome P450 monooxygenases ltmQ and ltmP can sequentially oxidize paspaline to terpendole E and terpendole F. Alternatively, ltmP converts paspaline to an intermediate which is oxidized by ltmQ to terpendole F. LtmF, ltmK, ltmE and ltmJ appear to be unique to the epichloe endophytes. The prenyltransferase ltmF is involved in the 27-hydroxyl-O-prenylation. The cytochrome P450 monooxygenase ltmK is required for the oxidative acetal ring formation. The multi-functional prenyltransferase ltmE is required for C20- and C21-prenylations of the indole ring of paspalanes and acts together with the cytochrome P450 monooxygenase ltmJ to yield lolitremanes by multiple oxidations and ring closures. The stereoisomer pairs of lolitriol and lolitrem N or lolitrem B and lolitrem F may be attributed to variations in the way in which ring closure can occur under the action of ltmJ. While the major product of this pathway is lolitrem B, the prenyl transferases and cytochrome P450 monooxygenases identified in this pathway have a remarkable versatility in their regio- and stereo-specificities to generate a diverse range of metabolites that are products of a metabolic grid rather than a linear pathway. The sequence is that of Lolitrem B biosynthesis cluster protein S from Epichloe festucae (strain Fl1).